Consider the following 89-residue polypeptide: Protein YihD (89 aa).

The protein to H.influenzae HI_0845.

The sequence is that of Protein YihD (yihD) from Escherichia coli O157:H7.